The chain runs to 1024 residues: Error-prone DNA polymerase (1024 aa).

It belongs to the DNA polymerase type-C family. DnaE2 subfamily.

It is found in the cytoplasm. It catalyses the reaction DNA(n) + a 2'-deoxyribonucleoside 5'-triphosphate = DNA(n+1) + diphosphate. In terms of biological role, DNA polymerase involved in damage-induced mutagenesis and translesion synthesis (TLS). It is not the major replicative DNA polymerase. This Pseudomonas paraeruginosa (strain DSM 24068 / PA7) (Pseudomonas aeruginosa (strain PA7)) protein is Error-prone DNA polymerase.